The sequence spans 643 residues: Threonine--tRNA ligase (643 aa).

The TGS domain occupies 1-61 (MPIITLPDGS…TEDSKLEIIT (61 aa)). The catalytic stretch occupies residues 243-534 (DHRKIGKALD…ITEEYAGFFP (292 aa)). Positions 334, 385, and 511 each coordinate Zn(2+).

It belongs to the class-II aminoacyl-tRNA synthetase family. Homodimer. The cofactor is Zn(2+).

The protein resides in the cytoplasm. It catalyses the reaction tRNA(Thr) + L-threonine + ATP = L-threonyl-tRNA(Thr) + AMP + diphosphate + H(+). Functionally, catalyzes the attachment of threonine to tRNA(Thr) in a two-step reaction: L-threonine is first activated by ATP to form Thr-AMP and then transferred to the acceptor end of tRNA(Thr). Also edits incorrectly charged L-seryl-tRNA(Thr). The sequence is that of Threonine--tRNA ligase from Pasteurella multocida (strain Pm70).